A 200-amino-acid polypeptide reads, in one-letter code: 2,3-bisphosphoglycerate-dependent phosphoglycerate mutase (200 aa).

Catalysis depends on histidine 9, which acts as the Tele-phosphohistidine intermediate. The active site involves histidine 142.

Belongs to the phosphoglycerate mutase family. Homodimer.

The catalysed reaction is (2R)-2-phosphoglycerate = (2R)-3-phosphoglycerate. The protein operates within carbohydrate degradation; glycolysis; pyruvate from D-glyceraldehyde 3-phosphate: step 3/5. In terms of biological role, catalyzes the interconversion of 2-phosphoglycerate and 3-phosphoglycerate. The polypeptide is 2,3-bisphosphoglycerate-dependent phosphoglycerate mutase (Thermoplasma acidophilum (strain ATCC 25905 / DSM 1728 / JCM 9062 / NBRC 15155 / AMRC-C165)).